A 380-amino-acid chain; its full sequence is PqqA peptide cyclase (380 aa).

The Radical SAM core domain maps to 12–228 (FGIPLAVLLE…EEARERLKGR (217 aa)). The [4Fe-4S] cluster site is built by cysteine 26, cysteine 30, and cysteine 33.

Belongs to the radical SAM superfamily. PqqE family. As to quaternary structure, interacts with PqqD. The interaction is necessary for activity of PqqE. It depends on [4Fe-4S] cluster as a cofactor.

The enzyme catalyses [PQQ precursor protein] + S-adenosyl-L-methionine = E-Y cross-linked-[PQQ precursor protein] + 5'-deoxyadenosine + L-methionine + H(+). It participates in cofactor biosynthesis; pyrroloquinoline quinone biosynthesis. Functionally, catalyzes the cross-linking of a glutamate residue and a tyrosine residue in the PqqA protein as part of the biosynthesis of pyrroloquinoline quinone (PQQ). This is PqqA peptide cyclase from Bradyrhizobium diazoefficiens (strain JCM 10833 / BCRC 13528 / IAM 13628 / NBRC 14792 / USDA 110).